Here is a 108-residue protein sequence, read N- to C-terminus: X antigen family member 5 (108 aa).

Residues 20–108 are disordered; that stretch reads VGPMLEPSVP…PEGGEGKPQL (89 aa). Composition is skewed to basic and acidic residues over residues 40 to 52 and 94 to 108; these read SQDHTPGQKREDD and EQFKMPEGGEGKPQL.

This sequence belongs to the GAGE family.

In Homo sapiens (Human), this protein is X antigen family member 5 (XAGE5).